A 539-amino-acid polypeptide reads, in one-letter code: Chaperonin GroEL (539 aa).

Residues Thr29–Pro32, Asp86–Thr90, Gly414, and Asp493 each bind ATP.

The protein belongs to the chaperonin (HSP60) family. In terms of assembly, forms a cylinder of 14 subunits composed of two heptameric rings stacked back-to-back. Interacts with the co-chaperonin GroES.

The protein resides in the cytoplasm. It carries out the reaction ATP + H2O + a folded polypeptide = ADP + phosphate + an unfolded polypeptide.. Functionally, together with its co-chaperonin GroES, plays an essential role in assisting protein folding. The GroEL-GroES system forms a nano-cage that allows encapsulation of the non-native substrate proteins and provides a physical environment optimized to promote and accelerate protein folding. In Staphylococcus aureus, this protein is Chaperonin GroEL.